The sequence spans 227 residues: C4-dicarboxylate TRAP transporter small permease protein DctQ (227 aa).

Residues 1–7 (MLRILDR) are Cytoplasmic-facing. The chain crosses the membrane as a helical span at residues 8–28 (AEEVLIAALIATATVLIFVSV). Topologically, residues 29–67 (THRFTLGFVADFVGFFRGHGMTGAAAAAKSLYTTLRGIN) are periplasmic. A helical membrane pass occupies residues 68 to 88 (LVWAQELCIILFVWMAKFGAA). Residues 89–112 (YGVRTGIHVGIDVLINRLDAPKRR) lie on the Cytoplasmic side of the membrane. The chain crosses the membrane as a helical span at residues 113–133 (FFILLGLGAGALFTGIIATLG). Topologically, residues 134–149 (ANFVLHMYHASSTSPD) are periplasmic. The helical transmembrane segment at 150-170 (LELPMWLVYLAIPMGSSLMCF) threads the bilayer. The Cytoplasmic portion of the chain corresponds to 171 to 227 (RFLQVAFGFARTGELPHHDHGHVDGVDTENEGIDAEGDVLLHSPLTPRDLVEKPKDN).

Belongs to the TRAP transporter small permease family. In terms of assembly, the complex comprises the extracytoplasmic solute receptor protein DctP, and the two transmembrane proteins DctQ and DctM.

The protein localises to the cell inner membrane. Functionally, part of the tripartite ATP-independent periplasmic (TRAP) transport system DctPQM involved in C4-dicarboxylates uptake. The protein is C4-dicarboxylate TRAP transporter small permease protein DctQ of Rhodobacter capsulatus (Rhodopseudomonas capsulata).